The primary structure comprises 94 residues: Large ribosomal subunit protein uL23 (94 aa).

It belongs to the universal ribosomal protein uL23 family. Part of the 50S ribosomal subunit. Contacts protein L29, and trigger factor when it is bound to the ribosome.

Its function is as follows. One of the early assembly proteins it binds 23S rRNA. One of the proteins that surrounds the polypeptide exit tunnel on the outside of the ribosome. Forms the main docking site for trigger factor binding to the ribosome. In Geobacter metallireducens (strain ATCC 53774 / DSM 7210 / GS-15), this protein is Large ribosomal subunit protein uL23.